The chain runs to 401 residues: Aspartate aminotransferase, mitochondrial (401 aa).

Position 19 is a phosphothreonine (threonine 19). Lysine 30 is modified (N6-acetyllysine). Glycine 36 serves as a coordination point for substrate. N6-acetyllysine; alternate is present on lysine 44. Lysine 44 bears the N6-succinyllysine; alternate mark. Lysine 53 carries the post-translational modification N6-acetyllysine. At lysine 61 the chain carries N6-acetyllysine; alternate. Lysine 61 is modified (N6-succinyllysine; alternate). Tyrosine 67 carries the post-translational modification 3'-nitrotyrosine; alternate. Tyrosine 67 is subject to Phosphotyrosine; alternate. Lysine 78, lysine 93, and lysine 130 each carry N6-acetyllysine; alternate. Residues lysine 78, lysine 93, and lysine 130 each carry the N6-succinyllysine; alternate modification. Tryptophan 133 lines the substrate pocket. The residue at position 156 (lysine 156) is an N6-acetyllysine; alternate. Lysine 156 bears the N6-succinyllysine; alternate mark. Asparagine 186 is a binding site for substrate. N6-succinyllysine is present on lysine 198. Lysine 205 carries the post-translational modification N6-acetyllysine. Residues lysine 250 and lysine 267 each carry the N6-acetyllysine; alternate modification. N6-(pyridoxal phosphate)lysine; alternate is present on lysine 250. Residue lysine 267 is modified to N6-succinyllysine; alternate. N6-acetyllysine is present on lysine 273. Residue lysine 280 is modified to N6-acetyllysine; alternate. Lysine 280 bears the N6-succinyllysine; alternate mark. Arginine 284 is subject to Asymmetric dimethylarginine. At lysine 309 the chain carries N6-acetyllysine; alternate. An N6-succinyllysine; alternate modification is found at lysine 309. At lysine 316 the chain carries N6-acetyllysine. Position 334 is an N6-acetyllysine; alternate (lysine 334). Position 334 is an N6-succinyllysine; alternate (lysine 334). 2 positions are modified to N6-acetyllysine: lysine 335 and lysine 358. 2 positions are modified to N6-acetyllysine; alternate: lysine 367 and lysine 375. N6-succinyllysine; alternate occurs at positions 367 and 375. Arginine 378 lines the substrate pocket.

It belongs to the class-I pyridoxal-phosphate-dependent aminotransferase family. As to quaternary structure, homodimer. Pyridoxal 5'-phosphate serves as cofactor.

The protein resides in the mitochondrion matrix. It localises to the cell membrane. The enzyme catalyses L-aspartate + 2-oxoglutarate = oxaloacetate + L-glutamate. The catalysed reaction is L-kynurenine + 2-oxoglutarate = kynurenate + L-glutamate + H2O. Its function is as follows. Catalyzes the irreversible transamination of the L-tryptophan metabolite L-kynurenine to form kynurenic acid (KA). As a member of the malate-aspartate shuttle, it has a key role in the intracellular NAD(H) redox balance. Is important for metabolite exchange between mitochondria and cytosol, and for amino acid metabolism. Facilitates cellular uptake of long-chain free fatty acids. The protein is Aspartate aminotransferase, mitochondrial (GOT2) of Equus caballus (Horse).